The following is a 276-amino-acid chain: Formamidopyrimidine-DNA glycosylase (276 aa).

Pro-2 serves as the catalytic Schiff-base intermediate with DNA. The Proton donor role is filled by Glu-3. The active-site Proton donor; for beta-elimination activity is the Lys-58. Residues His-92, Arg-111, and Arg-153 each coordinate DNA. The segment at 238 to 272 (TVYGRERQNCLNCSSTIIKTKHSGRSTFYCRTCQY) adopts an FPG-type zinc-finger fold. The active-site Proton donor; for delta-elimination activity is Arg-262.

The protein belongs to the FPG family. Monomer. Requires Zn(2+) as cofactor.

It catalyses the reaction Hydrolysis of DNA containing ring-opened 7-methylguanine residues, releasing 2,6-diamino-4-hydroxy-5-(N-methyl)formamidopyrimidine.. It carries out the reaction 2'-deoxyribonucleotide-(2'-deoxyribose 5'-phosphate)-2'-deoxyribonucleotide-DNA = a 3'-end 2'-deoxyribonucleotide-(2,3-dehydro-2,3-deoxyribose 5'-phosphate)-DNA + a 5'-end 5'-phospho-2'-deoxyribonucleoside-DNA + H(+). In terms of biological role, involved in base excision repair of DNA damaged by oxidation or by mutagenic agents. Acts as a DNA glycosylase that recognizes and removes damaged bases. Has a preference for oxidized purines, such as 7,8-dihydro-8-oxoguanine (8-oxoG). Has AP (apurinic/apyrimidinic) lyase activity and introduces nicks in the DNA strand. Cleaves the DNA backbone by beta-delta elimination to generate a single-strand break at the site of the removed base with both 3'- and 5'-phosphates. The chain is Formamidopyrimidine-DNA glycosylase from Rickettsia felis (strain ATCC VR-1525 / URRWXCal2) (Rickettsia azadi).